Here is a 173-residue protein sequence, read N- to C-terminus: Bifunctional protein PyrR (173 aa).

A PRPP-binding motif is present at residues V93–T105.

Belongs to the purine/pyrimidine phosphoribosyltransferase family. PyrR subfamily. Homodimer and homohexamer; in equilibrium.

It catalyses the reaction UMP + diphosphate = 5-phospho-alpha-D-ribose 1-diphosphate + uracil. Functionally, regulates transcriptional attenuation of the pyrimidine nucleotide (pyr) operon by binding in a uridine-dependent manner to specific sites on pyr mRNA. This disrupts an antiterminator hairpin in the RNA and favors formation of a downstream transcription terminator, leading to a reduced expression of downstream genes. Also displays a weak uracil phosphoribosyltransferase activity which is not physiologically significant. This is Bifunctional protein PyrR from Streptococcus pyogenes serotype M12 (strain MGAS2096).